We begin with the raw amino-acid sequence, 831 residues long: Translation initiation factor IF-2 (831 aa).

Residues 329–499 (TRAPVVTVMG…LLISEMQDLK (171 aa)) form the tr-type G domain. The tract at residues 338–345 (GHVDHGKT) is G1. 338-345 (GHVDHGKT) serves as a coordination point for GTP. The G2 stretch occupies residues 363 to 367 (GITQH). A G3 region spans residues 385–388 (DTPG). Residues 385 to 389 (DTPGH) and 439 to 442 (NKID) each bind GTP. Positions 439–442 (NKID) are G4. A G5 region spans residues 475-477 (SAL).

It belongs to the TRAFAC class translation factor GTPase superfamily. Classic translation factor GTPase family. IF-2 subfamily.

The protein localises to the cytoplasm. In terms of biological role, one of the essential components for the initiation of protein synthesis. Protects formylmethionyl-tRNA from spontaneous hydrolysis and promotes its binding to the 30S ribosomal subunits. Also involved in the hydrolysis of GTP during the formation of the 70S ribosomal complex. In Rickettsia typhi (strain ATCC VR-144 / Wilmington), this protein is Translation initiation factor IF-2.